The primary structure comprises 589 residues: MTLHSNSTTSPLFPNISSSWVHSPSEAGLPLGTVTQLGSYNISQETGNFSSNDTSSDPLGGHTIWQVVFIAFLTGFLALVTIIGNILVIVAFKVNKQLKTVNNYFLLSLACADLIIGVISMNLFTTYIIMNRWALGNLACDLWLSIDYVASNASVMNLLVISFDRYFSITRPLTYRAKRTTKRAGVMIGLAWVISFVLWAPAILFWQYFVGKRTVPPGECFIQFLSEPTITFGTAIAAFYMPVTIMTILYWRIYKETEKRTKELAGLQASGTEAEAENFVHPTGSSRSCSSYELQQQGVKRSSRRKYGRCHFWFTTKSWKPSAEQMDQDHSSSDSWNNNDAAASLENSASSDEEDIGSETRAIYSIVLKLPGHSSILNSTKLPSSDNLQVSNEDLGTVDVERNAHKLQAQKSMGDGDNCQKDFTKLPIQLESAVDTGKTSDTNSSADKTTATLPLSFKEATLAKRFALKTRSQITKRKRMSLIKEKKAAQTLSAILLAFIITWTPYNIMVLVNTFCDSCIPKTYWNLGYWLCYINSTVNPVCYALCNKTFRTTFKTLLLCQCDKRKRRKQQYQQRQSVIFHKRVPEQAL.

At M1–Q66 the chain is on the extracellular side. N-linked (GlcNAc...) asparagine glycosylation is found at N6, N15, N41, N48, and N52. A helical transmembrane segment spans residues V67–V90. Over A91–N103 the chain is Cytoplasmic. The helical transmembrane segment at Y104 to I129 threads the bilayer. At M130–D141 the chain is on the extracellular side. An intrachain disulfide couples C140 to C220. The chain crosses the membrane as a helical span at residues L142 to F163. The Cytoplasmic portion of the chain corresponds to D164–R183. The helical transmembrane segment at A184–F205 threads the bilayer. The Extracellular portion of the chain corresponds to W206–P228. Residues T229–W251 traverse the membrane as a helical segment. Over R252–Q490 the chain is Cytoplasmic. The short motif at A274–V280 is the Basolateral sorting signal element. Residues A323 to I356 are disordered. The segment covering S333 to S344 has biased composition (low complexity). S384 carries the phosphoserine modification. The helical transmembrane segment at T491–N513 threads the bilayer. The Extracellular segment spans residues T514 to W525. A disulfide bond links C516 and C519. A helical membrane pass occupies residues N526–L545. Topologically, residues C546–L589 are cytoplasmic.

Belongs to the G-protein coupled receptor 1 family. Muscarinic acetylcholine receptor subfamily. CHRM3 sub-subfamily. As to quaternary structure, homodimer; the dimers can form tetramers. Interacts with NALCN. Interacts with TMEM147.

It localises to the cell membrane. It is found in the postsynaptic cell membrane. The protein localises to the basolateral cell membrane. Its subcellular location is the endoplasmic reticulum membrane. In terms of biological role, the muscarinic acetylcholine receptor mediates various cellular responses, including inhibition of adenylate cyclase, breakdown of phosphoinositides and modulation of potassium channels through the action of G proteins. Primary transducing effect is Pi turnover. The sequence is that of Muscarinic acetylcholine receptor M3 (Chrm3) from Rattus norvegicus (Rat).